The following is a 609-amino-acid chain: Grainyhead-like protein 1 homolog (609 aa).

A transcription activation region spans residues 1–91 (MTQDYDNKRP…EHDHADHEHS (91 aa)). A disordered region spans residues 183–207 (SDHFTSNNQPPNSQRRTPDSTFSET). Over residues 185 to 206 (HFTSNNQPPNSQRRTPDSTFSE) the composition is skewed to polar residues. The Grh/CP2 DB domain maps to 239 to 465 (AGNNFEYTLE…DLDTQPVLFI (227 aa)). Interaction with DNA regions lie at residues 371 to 380 (TDFSSQKGVK) and 418 to 421 (RKIR).

This sequence belongs to the grh/CP2 family. Grainyhead subfamily. As to quaternary structure, binds DNA as homodimer.

The protein localises to the nucleus. Its function is as follows. Transcription factor involved in epithelial development. Binds directly to the consensus DNA sequence 5'-AACCGGTT-3' and modulates expression of epidermal-specific genes, including XK81A1. Important regulator of DSG1 in the context of epidermal differentiation. Regulates the maintenance of skin barrier. No genetic interaction with GRHL3, nor functional cooperativity due to diverse target gene selectivity during epithelia development. Functions downstream of BMP-signaling cascade modulating endogenous bmp4-responsive targets. The polypeptide is Grainyhead-like protein 1 homolog (Xenopus laevis (African clawed frog)).